Reading from the N-terminus, the 480-residue chain is Aspartyl/glutamyl-tRNA(Asn/Gln) amidotransferase subunit B (480 aa).

It belongs to the GatB/GatE family. GatB subfamily. Heterotrimer of A, B and C subunits.

The catalysed reaction is L-glutamyl-tRNA(Gln) + L-glutamine + ATP + H2O = L-glutaminyl-tRNA(Gln) + L-glutamate + ADP + phosphate + H(+). The enzyme catalyses L-aspartyl-tRNA(Asn) + L-glutamine + ATP + H2O = L-asparaginyl-tRNA(Asn) + L-glutamate + ADP + phosphate + 2 H(+). In terms of biological role, allows the formation of correctly charged Asn-tRNA(Asn) or Gln-tRNA(Gln) through the transamidation of misacylated Asp-tRNA(Asn) or Glu-tRNA(Gln) in organisms which lack either or both of asparaginyl-tRNA or glutaminyl-tRNA synthetases. The reaction takes place in the presence of glutamine and ATP through an activated phospho-Asp-tRNA(Asn) or phospho-Glu-tRNA(Gln). The polypeptide is Aspartyl/glutamyl-tRNA(Asn/Gln) amidotransferase subunit B (Streptococcus pneumoniae (strain Hungary19A-6)).